The sequence spans 304 residues: MHPEPAPPPNNSNPELPLSGGSSTSGSRRSRRRSGDGEPTGAPPLPPPPAVSYPDWIGQSYSEVMSLNEHSMQALSWRKLYLSRAKLKASSRTSALLSGFAMVAMVEVQLDTDHDYPPGLLIVFSACTTVLVAVHLFALMISTCILPNIEAVSNVHNLNSVKESPHERMHRHIELAWAFSTVIGTLLFLAEVVLLCWVKFLPLKRQAGQPSPTKPPTEPAVVVANSSNNGGITPGEAAAIASTAIMVPCGLVFIVFAVHFYRSLVSHKTDRQFQELNELAEFARLQDQLDHRGDHSLTPGTHYA.

Residues 1–11 show a composition bias toward pro residues; the sequence is MHPEPAPPPNN. Residues 1 to 49 form a disordered region; sequence MHPEPAPPPNNSNPELPLSGGSSTSGSRRSRRRSGDGEPTGAPPLPPPP. Residues 1 to 88 are Cytoplasmic-facing; sequence MHPEPAPPPN…KLYLSRAKLK (88 aa). Positions 3-49 are required for generation of inwardly rectifying CRAC currents; the sequence is PEPAPPPNNSNPELPLSGGSSTSGSRRSRRRSGDGEPTGAPPLPPPP. Residues 12–27 show a composition bias toward low complexity; the sequence is SNPELPLSGGSSTSGS. Residues 39-60 are AKAP5 association region; sequence PTGAPPLPPPPAVSYPDWIGQS. Residues 71–91 form an interaction with STIM1 region; sequence SMQALSWRKLYLSRAKLKASS. Residues 89-106 traverse the membrane as a helical segment; that stretch reads ASSRTSALLSGFAMVAMV. The Extracellular segment spans residues 107–120; sequence EVQLDTDHDYPPGL. Residues 121 to 141 form a helical membrane-spanning segment; that stretch reads LIVFSACTTVLVAVHLFALMI. Over 142–174 the chain is Cytoplasmic; the sequence is STCILPNIEAVSNVHNLNSVKESPHERMHRHIE. Residues 175–195 form a helical membrane-spanning segment; sequence LAWAFSTVIGTLLFLAEVVLL. The Extracellular segment spans residues 196–237; sequence CWVKFLPLKRQAGQPSPTKPPTEPAVVVANSSNNGGITPGEA. An N-linked (GlcNAc...) asparagine glycan is attached at asparagine 225. A helical transmembrane segment spans residues 238-258; sequence AAIASTAIMVPCGLVFIVFAV. Residues 259–304 lie on the Cytoplasmic side of the membrane; sequence HFYRSLVSHKTDRQFQELNELAEFARLQDQLDHRGDHSLTPGTHYA. The segment at 275 to 295 is interaction with STIM1; it reads ELNELAEFARLQDQLDHRGDH. Residue threonine 298 is modified to Phosphothreonine.

It belongs to the Orai family. Oligomerizes in homomeric and heteromeric ORAI complexes. Native CRAC channels most likely consist of hexameric ORAI heteromers, implying that diverse ORAI1, ORAI2 and ORAI3 subunit combinations with distinct biophysical properties can operate in a cell-type specific way. ARC channels are heteropentamers consisting of three ORAI1 and two ORAI3 subunits. Interacts with STIM1 and STIM2; this regulates channel activity. Interacts with CALM; this may displace STIM1 and STIM2 and might thereby modulate channel activity. Interacts (via N-terminus) with AKAP5 upon store depletion. Interacts with CRACR2A/EFCAB4B; the interaction is direct and takes place in absence of Ca(2+). Forms a complex with CRACR2A/EFCAB4B and STIM1 at low concentration of Ca(2+), the complex dissociates at elevated Ca(2+) concentrations. Interacts with ASPH (isoform 8). Interacts with SLC35G1. Interacts with UBQLN1. Interacts with ADCY8; interaction is calcium store depletion independent; interaction occurs in membrane raft; interaction increases markedly after store depletion; positively regulates SOCE-induced adenylate cyclase activity; contributes to the targeting of ADCY8 to discrete regions of the plasma membrane that are shielded from other calcium events. Interacts with EFHB; the interaction takes place upon Ca(2+)-store depletion. Interacts (via N- and C-termini) with ATP2C2 (via N-terminus); this interaction regulates Ca(2+) influx at the plasma membrane. Interacts with TSPAN18; this interaction regulates ORAI1 exit from the endoplasmic (ER), and/or Golgi, and trafficking to the cell surface. In terms of processing, N-glycosylated. N-glycosylation inhibits channel activity in T cells. Ubiquitinated. Post-translationally, cys-195 is oxidated, leading to inactivation of channel activity.

The protein resides in the cell membrane. It is found in the basolateral cell membrane. The enzyme catalyses Ca(2+)(in) = Ca(2+)(out). With respect to regulation, oxidation at Cys-196 leads to inactivation of channel activity. In terms of biological role, pore-forming subunit of two major inward rectifying Ca(2+) channels at the plasma membrane: Ca(2+) release-activated Ca(2+) (CRAC) channels and arachidonate-regulated Ca(2+)-selective (ARC) channels. Assembles with ORAI2 and ORAI3 to form hexameric CRAC channels that mediate Ca(2+) influx upon depletion of endoplasmic reticulum Ca(2+) store and channel activation by Ca(2+) sensor STIM1, a process known as store-operated Ca(2+) entry (SOCE). Various pore subunit combinations may account for distinct CRAC channel spatiotemporal and cell-type specific dynamics. ORAI1 mainly contributes to the generation of Ca(2+) plateaus involved in sustained Ca(2+) entry and is dispensable for cytosolic Ca(2+) oscillations, whereas ORAI2 and ORAI3 generate oscillatory patterns. CRAC channels assemble in Ca(2+) signaling microdomains where Ca(2+) influx is coupled to calmodulin and calcineurin signaling and activation of NFAT transcription factors recruited to ORAI1 via AKAP5. Activates NFATC2/NFAT1 and NFATC3/NFAT4-mediated transcriptional responses. CRAC channels are the main pathway for Ca(2+) influx in T cells and promote the immune response to pathogens by activating NFAT-dependent cytokine and chemokine transcription. Assembles with ORAI3 to form channels that mediate store-independent Ca(2+) influx in response to inflammatory metabolites arachidonate or its derivative leukotriene C4, termed ARC and LRC channels respectively. Plays a prominent role in Ca(2+) influx at the basolateral membrane of mammary epithelial cells independently of the Ca(2+) content of endoplasmic reticulum or Golgi stores. May mediate transepithelial transport of large quantities of Ca(2+) for milk secretion. The protein is Calcium release-activated calcium channel protein 1 (Orai1) of Rattus norvegicus (Rat).